The sequence spans 325 residues: Tetraacyldisaccharide 4'-kinase (325 aa).

Position 55 to 62 (55 to 62) interacts with ATP; the sequence is TAGGNGKT.

The protein belongs to the LpxK family.

It catalyses the reaction a lipid A disaccharide + ATP = a lipid IVA + ADP + H(+). Its pathway is glycolipid biosynthesis; lipid IV(A) biosynthesis; lipid IV(A) from (3R)-3-hydroxytetradecanoyl-[acyl-carrier-protein] and UDP-N-acetyl-alpha-D-glucosamine: step 6/6. In terms of biological role, transfers the gamma-phosphate of ATP to the 4'-position of a tetraacyldisaccharide 1-phosphate intermediate (termed DS-1-P) to form tetraacyldisaccharide 1,4'-bis-phosphate (lipid IVA). The chain is Tetraacyldisaccharide 4'-kinase from Salmonella paratyphi C (strain RKS4594).